We begin with the raw amino-acid sequence, 295 residues long: Giardin subunit alpha-1 (295 aa).

4 Annexin repeats span residues 2–71 (PKVT…MDLF), 73–143 (DRHE…MEKW), 153–223 (GSPE…AHFA), and 226–293 (GMHR…TLWR).

This sequence belongs to the annexin family. Giardin subunit alpha subfamily.

It is found in the cytoplasm. The protein localises to the cytoskeleton. Giardins are involved in parasite attachment to the intestinal mucosa and in the cytoskeletal disassembly and reassembly that marks the transition from infectious trophozoite to transmissible cyst. They may interact with other cytoskeletal proteins such as microtubules in the microribbons or crossbridges, to maintain the integrity of the ventral disk. This is Giardin subunit alpha-1 from Giardia intestinalis (Giardia lamblia).